The chain runs to 254 residues: Phosphoribosylaminoimidazole-succinocarboxamide synthase (254 aa).

This sequence belongs to the SAICAR synthetase family.

The catalysed reaction is 5-amino-1-(5-phospho-D-ribosyl)imidazole-4-carboxylate + L-aspartate + ATP = (2S)-2-[5-amino-1-(5-phospho-beta-D-ribosyl)imidazole-4-carboxamido]succinate + ADP + phosphate + 2 H(+). Its pathway is purine metabolism; IMP biosynthesis via de novo pathway; 5-amino-1-(5-phospho-D-ribosyl)imidazole-4-carboxamide from 5-amino-1-(5-phospho-D-ribosyl)imidazole-4-carboxylate: step 1/2. This is Phosphoribosylaminoimidazole-succinocarboxamide synthase from Sinorhizobium medicae (strain WSM419) (Ensifer medicae).